The sequence spans 87 residues: Non-structural protein NS3 (87 aa).

Its subcellular location is the host nucleus. In terms of biological role, plays a role in viral DNA replication. This is Non-structural protein NS3 from Mustela (ADV).